A 649-amino-acid polypeptide reads, in one-letter code: MSSFGAGKTKEVIFSVEDGSVKMFLRGRPVPMMIPDELAPTYSLDTRSELPSCRLKLEWVYGYRGRDCRANLYLLPTGEIVYFVASVAVLYSVEEQRQRHYLGHNDDIKCLAIHPDMVTIATGQVAGTTKEGKPLPPHVRIWDSVSLSTLHVLGLGVFDRAVCCVGFSKSNGGNLLCAVDESNDHMLSVWDWAKETKVVDVKCSNEAVLVATFHPTDPTVLITCGKSHIYFWTLEGGSLSKRQGLFEKHEKPKYVLCVTFLEGGDVVTGDSGGNLYVWGKGGNRITQAVLGAHDGGVFGLCALRDGTLVSGGGRDRRVVLWGSDYSKLQEVEVPEDFGPVRTVAEGHGDTLYVGTTRNSILQGSVHTGFSLLVQGHVEELWGLATHPSRAQFVTCGQDKLVHLWSSDSHQPLWSRIIEDPARSAGFHPSGSVLAVGTVTGRWLLLDTETHDLVAIHTDGNEQISVVSFSPDGAYLAVGSHDNLVYVYTVDQGGRKVSRLGKCSGHSSFITHLDWAQDSSCFVTNSGDYEILYWDPATCKQITSADAVRNMEWATATCVLGFGVFGIWSEGADGTDINAVARSHDGKLLASADDFGKVHLFSYPCCQPRALSHKYGGHSSHVTNVAFLWDDSMALTTGGKDTSVLQWRVV.

The segment at 10–649 (KEVIFSVEDG…DTSVLQWRVV (640 aa)) is tandem atypical propeller in EMLs. Coiled coils occupy residues 13–58 (IFSV…LKLE) and 73–114 (YLLP…LAIH). WD repeat units follow at residues 56 to 93 (KLEW…LYSV), 97 to 144 (RQRH…IWDS), 151 to 192 (HVLG…VWDW), 195 to 234 (ETKV…FWTL), 241 to 280 (KRQG…VWGK), 285 to 323 (ITQA…LWGS), 369 to 406 (FSLL…LWSS), 410 to 447 (QPLW…LLDT), 452 to 489 (LVAI…VYTV), 495 to 535 (KVSR…YWDP), 564 to 602 (FGIW…LFSY), and 609 to 648 (ALSH…QWRV).

This sequence belongs to the WD repeat EMAP family. In terms of assembly, homotrimer; self-association is mediated by the N-terminal coiled coil. As to quaternary structure, interacts with GRID2 and may also interact with GRID1. Interacts with EML3. Binds unpolymerized tubulins via its WD repeat region. In terms of tissue distribution, ubiquitous.

The protein resides in the cytoplasm. Its subcellular location is the cytoskeleton. The protein localises to the spindle. In terms of biological role, tubulin binding protein that inhibits microtubule nucleation and growth, resulting in shorter microtubules. This chain is Echinoderm microtubule-associated protein-like 2 (EML2), found in Homo sapiens (Human).